The sequence spans 232 residues: tRNA (guanine-N(7)-)-methyltransferase (232 aa).

4 residues coordinate S-adenosyl-L-methionine: Glu38, Asp63, Glu90, and Asp113. The active site involves Asp113. Positions 117 and 149 each coordinate substrate.

This sequence belongs to the class I-like SAM-binding methyltransferase superfamily. TrmB family.

The catalysed reaction is guanosine(46) in tRNA + S-adenosyl-L-methionine = N(7)-methylguanosine(46) in tRNA + S-adenosyl-L-homocysteine. The protein operates within tRNA modification; N(7)-methylguanine-tRNA biosynthesis. In terms of biological role, catalyzes the formation of N(7)-methylguanine at position 46 (m7G46) in tRNA. This chain is tRNA (guanine-N(7)-)-methyltransferase, found in Syntrophotalea carbinolica (strain DSM 2380 / NBRC 103641 / GraBd1) (Pelobacter carbinolicus).